Consider the following 502-residue polypeptide: Lysine--tRNA ligase (502 aa).

The Mg(2+) site is built by Glu409 and Glu416.

The protein belongs to the class-II aminoacyl-tRNA synthetase family. As to quaternary structure, homodimer. Mg(2+) is required as a cofactor.

Its subcellular location is the cytoplasm. The enzyme catalyses tRNA(Lys) + L-lysine + ATP = L-lysyl-tRNA(Lys) + AMP + diphosphate. The protein is Lysine--tRNA ligase of Prochlorococcus marinus (strain SARG / CCMP1375 / SS120).